Reading from the N-terminus, the 350-residue chain is Histidinol-phosphate aminotransferase (350 aa).

An N6-(pyridoxal phosphate)lysine modification is found at Lys209.

The protein belongs to the class-II pyridoxal-phosphate-dependent aminotransferase family. Histidinol-phosphate aminotransferase subfamily. In terms of assembly, homodimer. Requires pyridoxal 5'-phosphate as cofactor.

It carries out the reaction L-histidinol phosphate + 2-oxoglutarate = 3-(imidazol-4-yl)-2-oxopropyl phosphate + L-glutamate. Its pathway is amino-acid biosynthesis; L-histidine biosynthesis; L-histidine from 5-phospho-alpha-D-ribose 1-diphosphate: step 7/9. The polypeptide is Histidinol-phosphate aminotransferase (Citrifermentans bemidjiense (strain ATCC BAA-1014 / DSM 16622 / JCM 12645 / Bem) (Geobacter bemidjiensis)).